The sequence spans 587 residues: Aspartate--tRNA ligase (587 aa).

Glu-173 lines the L-aspartate pocket. The segment at 197-200 is aspartate; that stretch reads QTLK. Arg-219 lines the L-aspartate pocket. Residues 219–221 and Gln-228 each bind ATP; that span reads RDE. Residue His-446 coordinates L-aspartate. Residue Glu-480 participates in ATP binding. L-aspartate is bound at residue Arg-487. Position 532–535 (532–535) interacts with ATP; sequence GLDR.

It belongs to the class-II aminoacyl-tRNA synthetase family. Type 1 subfamily. As to quaternary structure, homodimer.

Its subcellular location is the cytoplasm. It carries out the reaction tRNA(Asp) + L-aspartate + ATP = L-aspartyl-tRNA(Asp) + AMP + diphosphate. Catalyzes the attachment of L-aspartate to tRNA(Asp) in a two-step reaction: L-aspartate is first activated by ATP to form Asp-AMP and then transferred to the acceptor end of tRNA(Asp). This Phocaeicola vulgatus (strain ATCC 8482 / DSM 1447 / JCM 5826 / CCUG 4940 / NBRC 14291 / NCTC 11154) (Bacteroides vulgatus) protein is Aspartate--tRNA ligase.